The sequence spans 308 residues: MVKPNKLANNNYLSSFDMTTDEFINILDLAKNFKNKKINIDPNNKVLGLIFDKSSTRTRVSFQVAMSRLGGTTIDLNPITSQIGRGEPIKDTARVLSRYCDVIAIRTFNHSDLEEYAKWSTIPVINALTDLEHPCQALADFLTIQEEFIDFRNVVLTFIGDGNNVANSLILCGALLGVEVRIACPRGYEPNVSVINKALEIYKNKNLLKIIHDPYDAVLGANVLYTDVWSSMGEENQKEDKDKDFKGFTINSSLVRKANKDAIILHCLPAYRGKEISAEVFESKISRIFKQAENRLHVQQALLAGLLS.

Carbamoyl phosphate contacts are provided by residues 55–58, Q82, R106, and 133–136; these read STRT and HPCQ. Residues N164, D227, and 231–232 each bind L-ornithine; that span reads SM. Carbamoyl phosphate contacts are provided by residues 267 to 268 and R295; that span reads CL.

This sequence belongs to the aspartate/ornithine carbamoyltransferase superfamily. OTCase family.

Its subcellular location is the cytoplasm. It carries out the reaction carbamoyl phosphate + L-ornithine = L-citrulline + phosphate + H(+). Its pathway is amino-acid biosynthesis; L-arginine biosynthesis; L-arginine from L-ornithine and carbamoyl phosphate: step 1/3. Functionally, reversibly catalyzes the transfer of the carbamoyl group from carbamoyl phosphate (CP) to the N(epsilon) atom of ornithine (ORN) to produce L-citrulline. This Prochlorococcus marinus (strain MIT 9312) protein is Ornithine carbamoyltransferase.